The sequence spans 355 residues: Capsid protein VP1/VP2 (355 aa).

Basic and acidic residues predominate over residues 1–21; the sequence is MADSTTMEHDGRGTKRKREAD. Residues 1–41 form a disordered region; it reads MADSTTMEHDGRGTKRKREADGGSGQGVGKGNSNAVKEGYG.

It belongs to the parvoviridae capsid protein family.

The protein localises to the virion. In terms of biological role, capsid protein self-assembles to form an icosahedral capsid with a T=1 symmetry, about 22 nm in diameter, and consisting of 60 copies of size variants of the capsid proteins, which differ in the N-terminushe capsid encapsulates the genomic ssDNA. Capsid proteins are responsible for the attachment to host cell receptors. This attachment induces virion internalization predominantly through clathrin-dependent endocytosis. This is Capsid protein VP1/VP2 (VP) from Aedes albopictus densovirus (isolate Boublik/1994) (AalDNV).